Here is a 326-residue protein sequence, read N- to C-terminus: uncharacterized protein (326 aa).

Residue G127–S134 coordinates ATP.

It belongs to the GSP E family.

This is an uncharacterized protein from Escherichia coli (strain K12).